A 287-amino-acid chain; its full sequence is tRNA-cytidine(32) 2-sulfurtransferase (287 aa).

Residues 58-63 carry the PP-loop motif motif; that stretch reads SGGKDS. [4Fe-4S] cluster is bound by residues Cys-133, Cys-136, and Cys-224.

Belongs to the TtcA family. As to quaternary structure, homodimer. The cofactor is Mg(2+). [4Fe-4S] cluster is required as a cofactor.

Its subcellular location is the cytoplasm. It carries out the reaction cytidine(32) in tRNA + S-sulfanyl-L-cysteinyl-[cysteine desulfurase] + AH2 + ATP = 2-thiocytidine(32) in tRNA + L-cysteinyl-[cysteine desulfurase] + A + AMP + diphosphate + H(+). It functions in the pathway tRNA modification. Its function is as follows. Catalyzes the ATP-dependent 2-thiolation of cytidine in position 32 of tRNA, to form 2-thiocytidine (s(2)C32). The sulfur atoms are provided by the cysteine/cysteine desulfurase (IscS) system. In Dinoroseobacter shibae (strain DSM 16493 / NCIMB 14021 / DFL 12), this protein is tRNA-cytidine(32) 2-sulfurtransferase.